A 288-amino-acid polypeptide reads, in one-letter code: ATP synthase gamma chain (288 aa).

The protein belongs to the ATPase gamma chain family. F-type ATPases have 2 components, CF(1) - the catalytic core - and CF(0) - the membrane proton channel. CF(1) has five subunits: alpha(3), beta(3), gamma(1), delta(1), epsilon(1). CF(0) has three main subunits: a, b and c.

Its subcellular location is the cell inner membrane. Its function is as follows. Produces ATP from ADP in the presence of a proton gradient across the membrane. The gamma chain is believed to be important in regulating ATPase activity and the flow of protons through the CF(0) complex. The protein is ATP synthase gamma chain of Rickettsia typhi (strain ATCC VR-144 / Wilmington).